We begin with the raw amino-acid sequence, 331 residues long: Vitamin B12 import system permease protein BtuC (331 aa).

A run of 7 helical transmembrane segments spans residues 21–43 (LALL…ERWI), 63–85 (PRTL…MQAV), 90–112 (LAEP…TVLL), 116–138 (LLPV…FLLL), 151–173 (LLIG…YFST), 193–210 (WRHG…LWLS), and 239–261 (VLVL…IAFI).

The protein belongs to the binding-protein-dependent transport system permease family. FecCD subfamily. In terms of assembly, the complex is composed of two ATP-binding proteins (BtuD), two transmembrane proteins (BtuC) and a solute-binding protein (BtuF).

It is found in the cell inner membrane. Functionally, part of the ABC transporter complex BtuCDF involved in vitamin B12 import. Involved in the translocation of the substrate across the membrane. This is Vitamin B12 import system permease protein BtuC from Pectobacterium atrosepticum (strain SCRI 1043 / ATCC BAA-672) (Erwinia carotovora subsp. atroseptica).